A 644-amino-acid polypeptide reads, in one-letter code: Zinc finger protein 568 (644 aa).

Positions 48–119 constitute a KRAB domain; sequence VTFKDVAVDL…EEEMFGRHCP (72 aa). C2H2-type zinc fingers lie at residues 222 to 244, 250 to 272, 278 to 300, 306 to 328, 334 to 356, 362 to 384, 390 to 412, 418 to 440, 446 to 468, 474 to 496, 502 to 524, 530 to 552, 558 to 580, 586 to 608, and 614 to 636; these read FKCN…ERIH, YECK…QKIH, YKCN…HRIH, YACK…ERIH, YECK…EKIH, YACN…MRSH, YKCN…MRSH, YVCS…MRNH, YECS…QRIH, YACT…EKIH, YHCN…EKIH, FKCN…VRSH, YECN…MRSH, and FECN…KRGH.

It belongs to the krueppel C2H2-type zinc-finger protein family. In terms of assembly, interacts with TRIM28.

It is found in the nucleus. Functionally, has transcriptional repression activity, partially through the recruitment of the corepressor TRIM28 but also has repression activity independently of this interaction. Essential during embryonic development, where it acts as a direct repressor of a placental-specific transcript of IGF2 in early development and regulates convergent extension movements required for axis elongation and tissue morphogenesis in all germ layers. Also important for normal morphogenesis of extraembryonic tissues including the yolk sac, extraembryonic mesoderm and placenta. May enhance proliferation or maintenance of neural stem cells. In Homo sapiens (Human), this protein is Zinc finger protein 568 (ZNF568).